We begin with the raw amino-acid sequence, 152 residues long: Large ribosomal subunit protein uL22 (152 aa).

This sequence belongs to the universal ribosomal protein uL22 family. Part of the 50S ribosomal subunit.

This protein binds specifically to 23S rRNA. It makes multiple contacts with different domains of the 23S rRNA in the assembled 50S subunit and ribosome. Its function is as follows. The globular domain of the protein is located near the polypeptide exit tunnel on the outside of the subunit, while an extended beta-hairpin is found that lines the wall of the exit tunnel in the center of the 70S ribosome. In Methanothrix thermoacetophila (strain DSM 6194 / JCM 14653 / NBRC 101360 / PT) (Methanosaeta thermophila), this protein is Large ribosomal subunit protein uL22.